Here is a 177-residue protein sequence, read N- to C-terminus: ATP-dependent protease subunit HslV (177 aa).

Residue threonine 6 is part of the active site. Na(+) contacts are provided by glycine 161, cysteine 164, and threonine 167.

This sequence belongs to the peptidase T1B family. HslV subfamily. In terms of assembly, a double ring-shaped homohexamer of HslV is capped on each side by a ring-shaped HslU homohexamer. The assembly of the HslU/HslV complex is dependent on binding of ATP.

The protein resides in the cytoplasm. The enzyme catalyses ATP-dependent cleavage of peptide bonds with broad specificity.. With respect to regulation, allosterically activated by HslU binding. Protease subunit of a proteasome-like degradation complex believed to be a general protein degrading machinery. This Petrotoga mobilis (strain DSM 10674 / SJ95) protein is ATP-dependent protease subunit HslV.